The following is a 103-amino-acid chain: Large ribosomal subunit protein bL21 (103 aa).

Belongs to the bacterial ribosomal protein bL21 family. Part of the 50S ribosomal subunit. Contacts protein L20.

In terms of biological role, this protein binds to 23S rRNA in the presence of protein L20. This is Large ribosomal subunit protein bL21 from Pseudomonas paraeruginosa (strain DSM 24068 / PA7) (Pseudomonas aeruginosa (strain PA7)).